Here is a 162-residue protein sequence, read N- to C-terminus: Probable chemoreceptor glutamine deamidase CheD 3 (162 aa).

The protein belongs to the CheD family.

The enzyme catalyses L-glutaminyl-[protein] + H2O = L-glutamyl-[protein] + NH4(+). Its function is as follows. Probably deamidates glutamine residues to glutamate on methyl-accepting chemotaxis receptors (MCPs), playing an important role in chemotaxis. The protein is Probable chemoreceptor glutamine deamidase CheD 3 of Geobacter sulfurreducens (strain ATCC 51573 / DSM 12127 / PCA).